The sequence spans 129 residues: Large ribosomal subunit protein eL31 (129 aa).

The segment at 1–46 (MSQETTATKQEEQKTSELQQQKKEEQKPQQATTTTKEEKKTKPEKE) is disordered. 2 stretches are compositionally biased toward basic and acidic residues: residues 9–27 (KQEEQKTSELQQQKKEEQK) and 35–46 (TKEEKKTKPEKE).

Belongs to the eukaryotic ribosomal protein eL31 family.

The protein is Large ribosomal subunit protein eL31 (rpl31e) of Sulfolobus acidocaldarius (strain ATCC 33909 / DSM 639 / JCM 8929 / NBRC 15157 / NCIMB 11770).